The chain runs to 318 residues: Bis(5'-nucleosyl)-tetraphosphatase, symmetrical (318 aa).

The interval 269–318 (PGREVTGPAPVARAPRRPRERQGRQRSRGNRGNAGNAAAGPKPSVDTPQD) is disordered. The segment covering 282-297 (APRRPRERQGRQRSRG) has biased composition (basic residues). Low complexity predominate over residues 298-311 (NRGNAGNAAAGPKP).

This sequence belongs to the Ap4A hydrolase family.

It catalyses the reaction P(1),P(4)-bis(5'-adenosyl) tetraphosphate + H2O = 2 ADP + 2 H(+). In terms of biological role, hydrolyzes diadenosine 5',5'''-P1,P4-tetraphosphate to yield ADP. This Xanthomonas euvesicatoria pv. vesicatoria (strain 85-10) (Xanthomonas campestris pv. vesicatoria) protein is Bis(5'-nucleosyl)-tetraphosphatase, symmetrical.